The primary structure comprises 97 residues: UPF0473 protein Exig_2070 (97 aa).

This sequence belongs to the UPF0473 family.

This is UPF0473 protein Exig_2070 from Exiguobacterium sibiricum (strain DSM 17290 / CCUG 55495 / CIP 109462 / JCM 13490 / 255-15).